The chain runs to 376 residues: N-acetyldiaminopimelate deacetylase (376 aa).

Asp69 is a catalytic residue. Residue Glu128 is the Proton acceptor of the active site.

It belongs to the peptidase M20A family. N-acetyldiaminopimelate deacetylase subfamily.

It carries out the reaction N-acetyl-(2S,6S)-2,6-diaminopimelate + H2O = (2S,6S)-2,6-diaminopimelate + acetate. The protein operates within amino-acid biosynthesis; L-lysine biosynthesis via DAP pathway; LL-2,6-diaminopimelate from (S)-tetrahydrodipicolinate (acetylase route): step 3/3. Its function is as follows. Catalyzes the conversion of N-acetyl-diaminopimelate to diaminopimelate and acetate. The chain is N-acetyldiaminopimelate deacetylase from Streptococcus pneumoniae (strain Hungary19A-6).